Consider the following 456-residue polypeptide: PTS system sucrose-specific EIIBC component (456 aa).

A PTS EIIB type-1 domain is found at 4–87 (EQISRSLLPL…IQAAGISESS (84 aa)). The Phosphocysteine intermediate; for EIIB activity role is filled by Cys26. The region spanning 107-456 (RLLSNIFVPI…LTLKYKTDAE (350 aa)) is the PTS EIIC type-1 domain. 10 helical membrane passes run 112–132 (IFVP…LLGM), 144–164 (ALYI…PILI), 181–201 (TLGG…AAGF), 209–229 (IEVA…AVWF), 247–267 (LILT…LLIG), 288–308 (AGWL…ITGI), 329–349 (FLLP…FAVW), 360–380 (ITLP…IFGI), 388–408 (FIAA…MHVY), and 428–448 (LLNY…LSLT).

The protein localises to the cell inner membrane. It carries out the reaction N(pros)-phospho-L-histidyl-[protein](out) + sucrose = sucrose 6(G)-phosphate(in) + L-histidyl-[protein]. The phosphoenolpyruvate-dependent sugar phosphotransferase system (sugar PTS), a major carbohydrate active transport system, catalyzes the phosphorylation of incoming sugar substrates concomitantly with their translocation across the cell membrane. This system is involved in sucrose transport. This Klebsiella pneumoniae protein is PTS system sucrose-specific EIIBC component.